The chain runs to 421 residues: Trimethyllysine dioxygenase, mitochondrial (421 aa).

The transit peptide at Met1 to Asp15 directs the protein to the mitochondrion. N6-acetyllysine occurs at positions 179 and 236. Fe cation is bound by residues His242, Asp244, and His389.

Belongs to the gamma-BBH/TMLD family. As to quaternary structure, homodimer. Fe(2+) serves as cofactor. L-ascorbate is required as a cofactor. All isoforms, but isoform 8, are widely expressed in adult and fetal tissues. Isoform 8 is restricted to heart and skeletal muscle.

It localises to the mitochondrion matrix. It catalyses the reaction N(6),N(6),N(6)-trimethyl-L-lysine + 2-oxoglutarate + O2 = (3S)-3-hydroxy-N(6),N(6),N(6)-trimethyl-L-lysine + succinate + CO2. It participates in amine and polyamine biosynthesis; carnitine biosynthesis. In terms of biological role, converts trimethyllysine (TML) into hydroxytrimethyllysine (HTML). This chain is Trimethyllysine dioxygenase, mitochondrial (TMLHE), found in Homo sapiens (Human).